Reading from the N-terminus, the 37-residue chain is Large ribosomal subunit protein bL36 (37 aa).

The protein belongs to the bacterial ribosomal protein bL36 family.

The protein is Large ribosomal subunit protein bL36 of Nitratiruptor sp. (strain SB155-2).